A 1310-amino-acid chain; its full sequence is Vacuolating cytotoxin autotransporter (1310 aa).

An N-terminal signal peptide occupies residues Met1–Ala30. Positions Pro339–Ile364 are disordered. The segment covering Asn350 to Ile364 has biased composition (polar residues). In terms of domain architecture, Autotransporter spans Lys1038–Phe1310.

The protein localises to the periplasm. It is found in the secreted. It localises to the cell surface. Its subcellular location is the cell outer membrane. In terms of biological role, induces vacuolation of eukaryotic cells. Causes ulceration and gastric lesions. The sequence is that of Vacuolating cytotoxin autotransporter (vacA) from Helicobacter pylori (Campylobacter pylori).